We begin with the raw amino-acid sequence, 108 residues long: uncharacterized protein (108 aa).

The next 3 helical transmembrane spans lie at 10–32, 45–67, and 77–99; these read SLCYFSVFIAPIIVPIVAYFVVN, ISHIVPFVGWLFLFIALLGGAVA, and FVIIGGAVIYFLVVIGIIIWNVI.

It is found in the cell membrane. This is an uncharacterized protein from Bacillus subtilis (strain 168).